Reading from the N-terminus, the 330-residue chain is Aspartate--ammonia ligase (330 aa).

It belongs to the class-II aminoacyl-tRNA synthetase family. AsnA subfamily.

The protein resides in the cytoplasm. The enzyme catalyses L-aspartate + NH4(+) + ATP = L-asparagine + AMP + diphosphate + H(+). Its pathway is amino-acid biosynthesis; L-asparagine biosynthesis; L-asparagine from L-aspartate (ammonia route): step 1/1. In Streptococcus equi subsp. zooepidemicus (strain H70), this protein is Aspartate--ammonia ligase.